Consider the following 287-residue polypeptide: Acetyl-coenzyme A carboxylase carboxyl transferase subunit beta (287 aa).

The region spanning 28–287 is the CoA carboxyltransferase N-terminal domain; the sequence is LWKKCPKCEN…ILSLLTNKVA (260 aa). Residues C32, C35, C51, and C54 each contribute to the Zn(2+) site. The C4-type zinc-finger motif lies at 32–54; the sequence is CPKCENVLYRPELEKNLDVCPKC.

This sequence belongs to the AccD/PCCB family. Acetyl-CoA carboxylase is a heterohexamer composed of biotin carboxyl carrier protein (AccB), biotin carboxylase (AccC) and two subunits each of ACCase subunit alpha (AccA) and ACCase subunit beta (AccD). Requires Zn(2+) as cofactor.

The protein localises to the cytoplasm. The enzyme catalyses N(6)-carboxybiotinyl-L-lysyl-[protein] + acetyl-CoA = N(6)-biotinyl-L-lysyl-[protein] + malonyl-CoA. It functions in the pathway lipid metabolism; malonyl-CoA biosynthesis; malonyl-CoA from acetyl-CoA: step 1/1. Component of the acetyl coenzyme A carboxylase (ACC) complex. Biotin carboxylase (BC) catalyzes the carboxylation of biotin on its carrier protein (BCCP) and then the CO(2) group is transferred by the transcarboxylase to acetyl-CoA to form malonyl-CoA. This Marinomonas sp. (strain MWYL1) protein is Acetyl-coenzyme A carboxylase carboxyl transferase subunit beta.